Here is a 416-residue protein sequence, read N- to C-terminus: Cysteate synthase (416 aa).

N6-(pyridoxal phosphate)lysine is present on Lys104. Asn130 lines the pyridoxal 5'-phosphate pocket.

It belongs to the threonine synthase family. Cysteate synthase subfamily. Homotrimer. Requires pyridoxal 5'-phosphate as cofactor.

The enzyme catalyses O-phospho-L-serine + sulfite + H(+) = L-cysteate + phosphate. It participates in cofactor biosynthesis; coenzyme M biosynthesis. Specifically catalyzes the beta-elimination of phosphate from L-phosphoserine and the beta-addition of sulfite to the dehydroalanine intermediate to produce L-cysteate. In Methanosarcina mazei (strain ATCC BAA-159 / DSM 3647 / Goe1 / Go1 / JCM 11833 / OCM 88) (Methanosarcina frisia), this protein is Cysteate synthase.